Reading from the N-terminus, the 207-residue chain is Large ribosomal subunit protein uL4 (207 aa).

Residues 48–70 (KAQKTRSEVSGGGAKPWRQKGTG) form a disordered region.

Belongs to the universal ribosomal protein uL4 family. Part of the 50S ribosomal subunit.

Functionally, one of the primary rRNA binding proteins, this protein initially binds near the 5'-end of the 23S rRNA. It is important during the early stages of 50S assembly. It makes multiple contacts with different domains of the 23S rRNA in the assembled 50S subunit and ribosome. Its function is as follows. Forms part of the polypeptide exit tunnel. The protein is Large ribosomal subunit protein uL4 of Francisella tularensis subsp. holarctica (strain FTNF002-00 / FTA).